Consider the following 810-residue polypeptide: Bifunctional aspartokinase/homoserine dehydrogenase 2 (810 aa).

An aspartokinase region spans residues 2 to 252 (SVIAQAGAKG…VKDACLLPLL (251 aa)). The tract at residues 253-463 (RLDEASELAR…RAEKRIGLVL (211 aa)) is interface. The segment at 464–810 (FGKGNIGSRW…SDINRLAQLL (347 aa)) is homoserine dehydrogenase. Asn468 and Ile469 together coordinate NADP(+). The NAD(+) site is built by Ile469 and Val498. Ile469 serves as a coordination point for NADPH. The NADP(+) site is built by Arg501, Thr549, and Lys573. Thr549 is an NAD(+) binding site. NADPH contacts are provided by Thr549 and Lys573. Na(+) contacts are provided by Val603, Ala605, and Leu607. The NADP(+) site is built by Gly658 and Glu661. L-homoserine contacts are provided by Glu661 and Asp672. Catalysis depends on Lys676, which acts as the Proton donor. Gly791 provides a ligand contact to NADP(+). Residue Gly791 coordinates NAD(+). Position 791 (Gly791) interacts with NADPH.

It in the N-terminal section; belongs to the aspartokinase family. This sequence in the C-terminal section; belongs to the homoserine dehydrogenase family. As to quaternary structure, homotetramer. A metal cation is required as a cofactor.

The enzyme catalyses L-homoserine + NADP(+) = L-aspartate 4-semialdehyde + NADPH + H(+). The catalysed reaction is L-homoserine + NAD(+) = L-aspartate 4-semialdehyde + NADH + H(+). It carries out the reaction L-aspartate + ATP = 4-phospho-L-aspartate + ADP. It functions in the pathway amino-acid biosynthesis; L-lysine biosynthesis via DAP pathway; (S)-tetrahydrodipicolinate from L-aspartate: step 1/4. The protein operates within amino-acid biosynthesis; L-methionine biosynthesis via de novo pathway; L-homoserine from L-aspartate: step 1/3. Its pathway is amino-acid biosynthesis; L-methionine biosynthesis via de novo pathway; L-homoserine from L-aspartate: step 3/3. It participates in amino-acid biosynthesis; L-threonine biosynthesis; L-threonine from L-aspartate: step 1/5. It functions in the pathway amino-acid biosynthesis; L-threonine biosynthesis; L-threonine from L-aspartate: step 3/5. Bifunctional aspartate kinase and homoserine dehydrogenase that catalyzes the first and the third steps toward the synthesis of lysine, methionine and threonine from aspartate. The sequence is that of Bifunctional aspartokinase/homoserine dehydrogenase 2 (metL) from Escherichia coli (strain K12).